The sequence spans 358 residues: Isopentenyl-diphosphate delta-isomerase (358 aa).

12–13 (RK) is a binding site for substrate. FMN contacts are provided by residues 69–71 (AMT), serine 99, and asparagine 128. A substrate-binding site is contributed by glutamine 158. Glutamate 159 is a Mg(2+) binding site. FMN-binding positions include lysine 190, threonine 220, 267-269 (GIR), and 288-289 (AG).

Belongs to the IPP isomerase type 2 family. Homooctamer. Dimer of tetramers. FMN serves as cofactor. NADPH is required as a cofactor. It depends on Mg(2+) as a cofactor.

The protein resides in the cytoplasm. The catalysed reaction is isopentenyl diphosphate = dimethylallyl diphosphate. Functionally, involved in the biosynthesis of isoprenoids. Catalyzes the 1,3-allylic rearrangement of the homoallylic substrate isopentenyl (IPP) to its allylic isomer, dimethylallyl diphosphate (DMAPP). This chain is Isopentenyl-diphosphate delta-isomerase, found in Listeria innocua serovar 6a (strain ATCC BAA-680 / CLIP 11262).